Consider the following 529-residue polypeptide: Isoleucine--tRNA ligase (529 aa).

E482 lines the L-isoleucyl-5'-AMP pocket. The 'KMSKS' region motif lies at 523–527 (KMSKS). K526 contacts ATP.

It belongs to the class-I aminoacyl-tRNA synthetase family. IleS type 1 subfamily. As to quaternary structure, monomer.

It is found in the cytoplasm. The enzyme catalyses tRNA(Ile) + L-isoleucine + ATP = L-isoleucyl-tRNA(Ile) + AMP + diphosphate. Its function is as follows. Catalyzes the attachment of isoleucine to tRNA(Ile). As IleRS can inadvertently accommodate and process structurally similar amino acids such as valine, to avoid such errors it has two additional distinct tRNA(Ile)-dependent editing activities. One activity is designated as 'pretransfer' editing and involves the hydrolysis of activated Val-AMP. The other activity is designated 'posttransfer' editing and involves deacylation of mischarged Val-tRNA(Ile). This Aquifex pyrophilus protein is Isoleucine--tRNA ligase (ileS).